We begin with the raw amino-acid sequence, 828 residues long: USP6 N-terminal-like protein (828 aa).

N-acetylmethionine is present on M1. One can recognise a Rab-GAP TBC domain in the interval 100–292 (GIPLQLRGEV…RIWDIYIFEG (193 aa)). Basic and acidic residues predominate over residues 355 to 367 (DLPEPGKEDEYPK). A disordered region spans residues 355–722 (DLPEPGKEDE…NSGSPKNGKL (368 aa)). Phosphoserine occurs at positions 391, 396, and 400. Over residues 434-451 (KSVEEESKKLKDEADFQR) the composition is skewed to basic and acidic residues. The segment covering 465–478 (NHAAANQNSNATSN) has biased composition (low complexity). Composition is skewed to basic and acidic residues over residues 498–508 (RTAKYTMEGKG) and 535–544 (KALDAEDGKR). Residues S546 and S549 each carry the phosphoserine modification. Y582 is subject to Phosphotyrosine. S585 carries the phosphoserine modification. Residues 592–603 (PSSSPSKVSNKF) show a composition bias toward polar residues. 5 positions are modified to phosphoserine: S642, S655, S659, S676, and S680. 2 stretches are compositionally biased toward polar residues: residues 648 to 666 (TANSSFASPQFSPGTQLNP) and 673 to 683 (STLSVSASPEK). Residues 686–697 (SRPSPLVLPSSR) are compositionally biased toward low complexity. S716 is subject to Phosphoserine. Y729 is subject to Phosphotyrosine. The interval 789 to 817 (KASPAAEDASPSGYPYSGPPPPAYHYRNR) is disordered.

As to quaternary structure, interacts with EPS8. Widely expressed.

It is found in the golgi apparatus. The protein localises to the cytoplasmic vesicle. Functionally, acts as a GTPase-activating protein for RAB5A and RAB43. Involved in receptor trafficking. In complex with EPS8 inhibits internalization of EGFR. Involved in retrograde transport from the endocytic pathway to the Golgi apparatus. Involved in the transport of Shiga toxin from early and recycling endosomes to the trans-Golgi network. Required for structural integrity of the Golgi complex. In Homo sapiens (Human), this protein is USP6 N-terminal-like protein (USP6NL).